A 33-amino-acid polypeptide reads, in one-letter code: Protamine-2C (33 aa).

Positions 1-33 (MPRRRRSSRRPVRRRRRPRVSRRRRRRGGRRRR) are disordered.

In terms of tissue distribution, testis.

It localises to the nucleus. Its subcellular location is the chromosome. In terms of biological role, protamines substitute for histones in the chromatin of sperm during the haploid phase of spermatogenesis. They compact sperm DNA into a highly condensed, stable and inactive complex. The sequence is that of Protamine-2C from Oncorhynchus mykiss (Rainbow trout).